We begin with the raw amino-acid sequence, 156 residues long: Small ribosomal subunit protein uS7 (156 aa).

It belongs to the universal ribosomal protein uS7 family. In terms of assembly, part of the 30S ribosomal subunit. Contacts proteins S9 and S11.

In terms of biological role, one of the primary rRNA binding proteins, it binds directly to 16S rRNA where it nucleates assembly of the head domain of the 30S subunit. Is located at the subunit interface close to the decoding center, probably blocks exit of the E-site tRNA. The polypeptide is Small ribosomal subunit protein uS7 (Bacillus velezensis (strain DSM 23117 / BGSC 10A6 / LMG 26770 / FZB42) (Bacillus amyloliquefaciens subsp. plantarum)).